A 460-amino-acid polypeptide reads, in one-letter code: Tubby-related protein 3 (460 aa).

2 disordered regions span residues K37–P132 and Y151–A193. Over residues Y151–G162 the composition is skewed to acidic residues. Low complexity predominate over residues S166–A188.

This sequence belongs to the TUB family. In terms of assembly, associates with the IFT complex A (IFT-A). Interacts with SIRT1. As to expression, widely expressed including eyes and adipose depots.

The protein resides in the nucleus. The protein localises to the cell membrane. It localises to the cell projection. It is found in the cilium. Its subcellular location is the cytoplasm. The protein resides in the secreted. Its function is as follows. Negative regulator of the Shh signaling transduction pathway: recruited to primary cilia via association with the IFT complex A (IFT-A) and is required for recruitment of G protein-coupled receptor GPR161 to cilia, a promoter of PKA-dependent basal repression machinery in Shh signaling. Binds to phosphorylated inositide (phosphoinositide) lipids. Both IFT-A- and phosphoinositide-binding properties are required to regulate ciliary G protein-coupled receptor trafficking. During adipogenesis, regulates ciliary trafficking of FFAR4 in preadipocytes. The protein is Tubby-related protein 3 of Mus musculus (Mouse).